A 456-amino-acid chain; its full sequence is Putative F-box/LRR-repeat protein At5g02700 (456 aa).

Residues 26-72 (ADFINYMPDDILHHILSFIPTDLAMRTSVLSRRWRHVWCETPCLDIT) form the F-box domain. LRR repeat units follow at residues 126–154 (VRDF…DVTL), 177–202 (FCQI…TLDT), 206–224 (LERL…DINQ), 271–300 (LSPL…TVGE), and 330–355 (FVRS…RPST).

This chain is Putative F-box/LRR-repeat protein At5g02700, found in Arabidopsis thaliana (Mouse-ear cress).